The following is a 179-amino-acid chain: MRMEHIYKFQHWLFFIGLGVLLSLSLSVKANDFEGSNDRRSIALKARSFVSINENRTALSRKLLLSPDIGDGTNRIGQDCSKDDIVLFQGSTNPLPSGVPSYTVEIFNSCVSDCNIAEIHVSCGWFSSVRLVNPRVFRRLDYDDCLVNDGQPLGPGQSLSFQYANSFSYPLSVASVSCF.

The first 30 residues, M1 to A30, serve as a signal peptide directing secretion.

In Arabidopsis thaliana (Mouse-ear cress), this protein is TPD1 protein homolog 1.